Consider the following 210-residue polypeptide: Probable molybdenum cofactor guanylyltransferase (210 aa).

Residues 18–20 (LAG), Lys-31, Asn-59, Asp-86, and Asp-111 contribute to the GTP site. Asp-111 provides a ligand contact to Mg(2+).

This sequence belongs to the MobA family. The cofactor is Mg(2+).

It localises to the cytoplasm. The catalysed reaction is Mo-molybdopterin + GTP + H(+) = Mo-molybdopterin guanine dinucleotide + diphosphate. Transfers a GMP moiety from GTP to Mo-molybdopterin (Mo-MPT) cofactor (Moco or molybdenum cofactor) to form Mo-molybdopterin guanine dinucleotide (Mo-MGD) cofactor. This chain is Probable molybdenum cofactor guanylyltransferase (nasC), found in Haloferax mediterranei (strain ATCC 33500 / DSM 1411 / JCM 8866 / NBRC 14739 / NCIMB 2177 / R-4) (Halobacterium mediterranei).